A 780-amino-acid chain; its full sequence is MAAESSLRVATPTICNLNGSQRRPTTLSPLRFMGFSPRPSHSLTSSSLSHFFGSTRINSNSSSISRQHAPRRNFSVFAMSGDDAKRSVPLKDYRNIGIMAHIDAGKTTTTERILYYTGRNYKIGEVHEGTATMDWMEQEQERGITITSAATTTFWNKHRINIIDTPGHVDFTLEVERALRVLDGAICLFDSVAGVEPQSETVWRQADKYGVPRICFVNKMDRLGANFYRTRDMIVTNLGAKPLVIQLPIGSEDNFKGVIDLVRNKAIVWSGEELGAKFDIVDVPEDLQEQAQEYRAQMIETIVEFDDQAMENYLEGIEPDEETIKKLIRKGTISASFVPVMCGSAFKNKGVQPLLDAVVDYLPSPLDLPAMKGSDPENPEETIERVASDDEPFAGLAFKIMSDPFVGSLTFVRVYAGKLSAGSYVLNANKGKKERIGRLLEMHANSREDVKVALAGDIIALAGLKDTITGETLCDPDNPIVLERMDFPDPVIKVAIEPKTKADVDKMATGLIKLAQEDPSFHFSRDEEINQTVIEGMGELHLEIIVDRLKREFKVEANVGAPQVNYRESISKTAEVKYVHKKQSGGQGQFADITVRFEPMDPGSGYEFKSEIKGGAVPKEYIPGVMKGLEECMSNGVLAGFPVVDVRAVLTDGSYHDVDSSVLAFQLAARGAFREGIRKAGPRMLEPIMKVEVVTPEEHLGDVIGDLNSRRGQINSFGDKPGGLKVVDALVPLAEMFQYVSTLRGMTKGRASYTMQLAMFDVVPQHIQNQLATKEQEVAA.

The N-terminal 79 residues, 1–79 (MAAESSLRVA…PRRNFSVFAM (79 aa)), are a transit peptide targeting the chloroplast. The region spanning 91–366 (KDYRNIGIMA…AVVDYLPSPL (276 aa)) is the tr-type G domain. GTP-binding positions include 100-107 (AHIDAGKT), 164-168 (DTPGH), and 218-221 (NKMD).

This sequence belongs to the TRAFAC class translation factor GTPase superfamily. Classic translation factor GTPase family. EF-G/EF-2 subfamily.

Its subcellular location is the plastid. The protein resides in the chloroplast. Its pathway is protein biosynthesis; polypeptide chain elongation. In terms of biological role, chloroplast-localized elongation factor EF-G involved in protein synthesis in plastids. Catalyzes the GTP-dependent ribosomal translocation step during translation elongation. During this step, the ribosome changes from the pre-translocational (PRE) to the post-translocational (POST) state as the newly formed A-site-bound peptidyl-tRNA and P-site-bound deacylated tRNA move to the P and E sites, respectively. Catalyzes the coordinated movement of the two tRNA molecules, the mRNA and conformational changes in the ribosome. This chain is Elongation factor G-2, chloroplastic (fusA2), found in Glycine max (Soybean).